Consider the following 360-residue polypeptide: Peptide chain release factor 1 (360 aa).

Gln-236 bears the N5-methylglutamine mark.

Belongs to the prokaryotic/mitochondrial release factor family. In terms of processing, methylated by PrmC. Methylation increases the termination efficiency of RF1.

The protein resides in the cytoplasm. Its function is as follows. Peptide chain release factor 1 directs the termination of translation in response to the peptide chain termination codons UAG and UAA. This is Peptide chain release factor 1 from Limosilactobacillus fermentum (strain NBRC 3956 / LMG 18251) (Lactobacillus fermentum).